Reading from the N-terminus, the 269-residue chain is Zinc transporter ZupT (269 aa).

The next 8 membrane-spanning stretches (helical) occupy residues 12–32 (AFSI…LVMF), 41–61 (LSFG…TEIF), 75–95 (DHAF…IALI), 126–146 (MMAA…TFFA), 152–172 (AVGM…GISI), 187–207 (VWAC…GYLV), 211–231 (FLSP…MVFL), and 249–269 (TVYG…LFHF). Fe(2+) contacts are provided by N136 and E139. Residues E139 and H164 each contribute to the Zn(2+) site. Fe(2+) is bound by residues N165, E168, and E197. E168 is a Zn(2+) binding site.

This sequence belongs to the ZIP transporter (TC 2.A.5) family. ZupT subfamily.

It is found in the cell inner membrane. The enzyme catalyses Zn(2+)(in) = Zn(2+)(out). Functionally, mediates zinc uptake. May also transport other divalent cations. In Neisseria meningitidis serogroup B (strain ATCC BAA-335 / MC58), this protein is Zinc transporter ZupT.